The following is a 162-amino-acid chain: Nucleotide-binding protein CMM_2802 (162 aa).

The protein belongs to the YajQ family.

In terms of biological role, nucleotide-binding protein. This chain is Nucleotide-binding protein CMM_2802, found in Clavibacter michiganensis subsp. michiganensis (strain NCPPB 382).